We begin with the raw amino-acid sequence, 359 residues long: Probable dual-specificity RNA methyltransferase RlmN (359 aa).

Catalysis depends on Glu93, which acts as the Proton acceptor. Positions 107-337 (KSERVTLCVS…VTMRYEKGHD (231 aa)) constitute a Radical SAM core domain. A disulfide bond links Cys114 and Cys342. [4Fe-4S] cluster-binding residues include Cys121, Cys125, and Cys128. Residues 168-169 (GE), Ser200, 223-225 (SLH), and Asn299 each bind S-adenosyl-L-methionine. Cys342 serves as the catalytic S-methylcysteine intermediate.

This sequence belongs to the radical SAM superfamily. RlmN family. Requires [4Fe-4S] cluster as cofactor.

It localises to the cytoplasm. It carries out the reaction adenosine(2503) in 23S rRNA + 2 reduced [2Fe-2S]-[ferredoxin] + 2 S-adenosyl-L-methionine = 2-methyladenosine(2503) in 23S rRNA + 5'-deoxyadenosine + L-methionine + 2 oxidized [2Fe-2S]-[ferredoxin] + S-adenosyl-L-homocysteine. It catalyses the reaction adenosine(37) in tRNA + 2 reduced [2Fe-2S]-[ferredoxin] + 2 S-adenosyl-L-methionine = 2-methyladenosine(37) in tRNA + 5'-deoxyadenosine + L-methionine + 2 oxidized [2Fe-2S]-[ferredoxin] + S-adenosyl-L-homocysteine. In terms of biological role, specifically methylates position 2 of adenine 2503 in 23S rRNA and position 2 of adenine 37 in tRNAs. The sequence is that of Probable dual-specificity RNA methyltransferase RlmN from Akkermansia muciniphila (strain ATCC BAA-835 / DSM 22959 / JCM 33894 / BCRC 81048 / CCUG 64013 / CIP 107961 / Muc).